A 272-amino-acid polypeptide reads, in one-letter code: Flagellin (272 aa).

Belongs to the bacterial flagellin family.

It is found in the secreted. Its subcellular location is the bacterial flagellum. Functionally, flagellin is the subunit protein which polymerizes to form the filaments of bacterial flagella. This is Flagellin (hag) from Halalkalibacterium halodurans (strain ATCC BAA-125 / DSM 18197 / FERM 7344 / JCM 9153 / C-125) (Bacillus halodurans).